We begin with the raw amino-acid sequence, 136 residues long: Calmodulin-A (136 aa).

4 consecutive EF-hand domains span residues 1 to 36 (EQIAEFKEAFSLFDKDGDGTITTKELGTVMRSLGQN), 37 to 72 (PTEAELQDMINEVDADGNGTIDFPEFLTMMARKMKD), 74 to 109 (DSEEEIREAFRVFDKDGNGYISAAELRHVMTNLGEK), and 110 to 136 (LTDEEVDEMIREADIDGDGQVNYEEFV). Ca(2+) is bound by residues Asp14, Asp16, Asp18, Thr20, Glu25, Asp50, Asp52, Asn54, Thr56, Glu61, Asp87, Asp89, Asn91, Tyr93, and Glu98. An N6,N6,N6-trimethyllysine modification is found at Lys109. Residues Asp123, Asp125, Asp127, Gln129, and Glu134 each contribute to the Ca(2+) site.

The protein belongs to the calmodulin family.

Its function is as follows. Calmodulin acts as part of a calcium signal transduction pathway by mediating the control of a large number of enzymes, ion channels, aquaporins and other proteins through calcium-binding. Calcium-binding is required for the activation of calmodulin. Among the enzymes to be stimulated by the calmodulin-calcium complex are a number of protein kinases, such as myosin light-chain kinases and calmodulin-dependent protein kinase type II (CaMK2), and phosphatases. The sequence is that of Calmodulin-A (calm1) from Oryzias latipes (Japanese rice fish).